Consider the following 238-residue polypeptide: Small ribosomal subunit protein eS4 (238 aa).

Residues 38 to 110 (LPLAIIIRDV…EKKYYALIPI (73 aa)) enclose the S4 RNA-binding domain.

It belongs to the eukaryotic ribosomal protein eS4 family.

The sequence is that of Small ribosomal subunit protein eS4 from Pyrobaculum islandicum (strain DSM 4184 / JCM 9189 / GEO3).